A 140-amino-acid polypeptide reads, in one-letter code: Large ribosomal subunit protein bL17 (140 aa).

The tract at residues 121–140 is disordered; it reads AAKGLDSGPTAEANDDDSEE.

Belongs to the bacterial ribosomal protein bL17 family. In terms of assembly, part of the 50S ribosomal subunit. Contacts protein L32.

This Rhodospirillum rubrum (strain ATCC 11170 / ATH 1.1.1 / DSM 467 / LMG 4362 / NCIMB 8255 / S1) protein is Large ribosomal subunit protein bL17.